A 685-amino-acid chain; its full sequence is Acetate--CoA ligase [ADP-forming] I (685 aa).

An ATP-grasp domain is found at 477–513 (LPVLEAYGIEVAPYGIARNVDEARDIAESIGYPVVLK). ATP is bound at residue 503 to 514 (AESIGYPVVLKV).

It in the N-terminal section; belongs to the acetate CoA ligase alpha subunit family. This sequence in the C-terminal section; belongs to the acetate CoA ligase beta subunit family. In terms of assembly, homodimer.

The enzyme catalyses acetate + ATP + CoA = acetyl-CoA + ADP + phosphate. With respect to regulation, activity requires divalent metal cations. In terms of biological role, catalyzes the reversible formation of acetate and ATP from acetyl-CoA by using ADP and phosphate. Can use other substrates such as propionyl-CoA and butyryl-CoA, but not phenylacetyl-CoA. Seems to be involved primarily in the conversion of acetyl-CoA to acetate. Participates in the degradation of branched-chain amino acids via branched-chain-acyl-CoA esters. The protein is Acetate--CoA ligase [ADP-forming] I of Archaeoglobus fulgidus (strain ATCC 49558 / DSM 4304 / JCM 9628 / NBRC 100126 / VC-16).